A 287-amino-acid polypeptide reads, in one-letter code: Diaminopimelate epimerase (287 aa).

Positions 15 and 66 each coordinate substrate. Catalysis depends on cysteine 75, which acts as the Proton donor. Substrate-binding positions include 76–77 (GN), asparagine 170, asparagine 203, and 221–222 (ER). Catalysis depends on cysteine 230, which acts as the Proton acceptor. Position 231 to 232 (231 to 232 (GT)) interacts with substrate.

It belongs to the diaminopimelate epimerase family. In terms of assembly, homodimer.

It localises to the cytoplasm. The enzyme catalyses (2S,6S)-2,6-diaminopimelate = meso-2,6-diaminopimelate. It participates in amino-acid biosynthesis; L-lysine biosynthesis via DAP pathway; DL-2,6-diaminopimelate from LL-2,6-diaminopimelate: step 1/1. Catalyzes the stereoinversion of LL-2,6-diaminopimelate (L,L-DAP) to meso-diaminopimelate (meso-DAP), a precursor of L-lysine and an essential component of the bacterial peptidoglycan. This chain is Diaminopimelate epimerase, found in Desulfovibrio desulfuricans (strain ATCC 27774 / DSM 6949 / MB).